A 397-amino-acid polypeptide reads, in one-letter code: Protein-glutamate methylesterase/protein-glutamine glutaminase of group 2 operon (397 aa).

One can recognise a Response regulatory domain in the interval 21-139 (RVMIVDDSVV…EASAADTFHH (119 aa)). 4-aspartylphosphate is present on Asp72. Residues 199-388 (PFSTLAPKVL…LPLNQIGAKV (190 aa)) form the CheB-type methylesterase domain. Catalysis depends on residues Ser213, His241, and Asp337.

Belongs to the CheB family. Post-translationally, phosphorylated by CheA. Phosphorylation of the N-terminal regulatory domain activates the methylesterase activity.

The protein localises to the cytoplasm. It carries out the reaction [protein]-L-glutamate 5-O-methyl ester + H2O = L-glutamyl-[protein] + methanol + H(+). The enzyme catalyses L-glutaminyl-[protein] + H2O = L-glutamyl-[protein] + NH4(+). In terms of biological role, involved in chemotaxis. Part of a chemotaxis signal transduction system that modulates chemotaxis in response to various stimuli. Catalyzes the demethylation of specific methylglutamate residues introduced into the chemoreceptors (methyl-accepting chemotaxis proteins or MCP) by CheR. Also mediates the irreversible deamidation of specific glutamine residues to glutamic acid. The sequence is that of Protein-glutamate methylesterase/protein-glutamine glutaminase of group 2 operon from Bradyrhizobium diazoefficiens (strain JCM 10833 / BCRC 13528 / IAM 13628 / NBRC 14792 / USDA 110).